A 66-amino-acid polypeptide reads, in one-letter code: Conotoxin Cal6.38 (66 aa).

The first 22 residues, 1 to 22 (MKLTFVLIVAVLVLAVCNFTVA), serve as a signal peptide directing secretion. Disulfide bonds link C38–C55, C45–C59, and C54–C64.

This sequence belongs to the conotoxin O1 superfamily. Expressed by the venom duct.

The protein resides in the secreted. Functionally, probable neurotoxin. The polypeptide is Conotoxin Cal6.38 (Californiconus californicus (California cone)).